We begin with the raw amino-acid sequence, 379 residues long: Armadillo repeat-containing X-linked protein 3 (379 aa).

Over 1–6 (MGYARK) the chain is Mitochondrial intermembrane. Mitochondrion outer membrane (MOM)-targeting sequence stretches follow at residues 1–6 (MGYARK) and 26–37 (RLTRGRKQNKEK). A helical; Signal-anchor membrane pass occupies residues 7–29 (VGWVTAGLVIGAGACYCIYRLTR). The Cytoplasmic portion of the chain corresponds to 30 to 379 (GRKQNKEKMA…AEHMFPKSQE (350 aa)). Ser61, Ser67, and Ser72 each carry phosphoserine. The segment at 89–98 (RARARARARA) is nuclear localization signal. Residue Ser110 is modified to Phosphoserine. ARM repeat units lie at residues 111–151 (PNSD…NNAA), 153–192 (AFNRDIIRDLGGLPIVAKILNTRDPIVKEKALIVLNNLSV), and 233–272 (VTNEYQHMLANSISDFFRLFSAGNEETKLQVLKLLLNLAE).

This sequence belongs to the eutherian X-chromosome-specific Armcx family. Interacts (via ARM domain) with MIRO1, MIRO2 and TRAK2. The interaction with Miro is calcium-dependent. Interacts with SOX10.

The protein resides in the mitochondrion outer membrane. It localises to the cytoplasm. The protein localises to the nucleus. In terms of biological role, regulates mitochondrial aggregation and transport in axons in living neurons. May link mitochondria to the TRAK2-kinesin motor complex via its interaction with Miro and TRAK2. Mitochondrial distribution and dynamics is regulated through ARMCX3 protein degradation, which is promoted by PCK and negatively regulated by WNT1. Enhances the SOX10-mediated transactivation of the neuronal acetylcholine receptor subunit alpha-3 and beta-4 subunit gene promoters. This chain is Armadillo repeat-containing X-linked protein 3 (ARMCX3), found in Pongo abelii (Sumatran orangutan).